A 151-amino-acid chain; its full sequence is SsrA-binding protein (151 aa).

The protein belongs to the SmpB family.

Its subcellular location is the cytoplasm. Required for rescue of stalled ribosomes mediated by trans-translation. Binds to transfer-messenger RNA (tmRNA), required for stable association of tmRNA with ribosomes. tmRNA and SmpB together mimic tRNA shape, replacing the anticodon stem-loop with SmpB. tmRNA is encoded by the ssrA gene; the 2 termini fold to resemble tRNA(Ala) and it encodes a 'tag peptide', a short internal open reading frame. During trans-translation Ala-aminoacylated tmRNA acts like a tRNA, entering the A-site of stalled ribosomes, displacing the stalled mRNA. The ribosome then switches to translate the ORF on the tmRNA; the nascent peptide is terminated with the 'tag peptide' encoded by the tmRNA and targeted for degradation. The ribosome is freed to recommence translation, which seems to be the essential function of trans-translation. The chain is SsrA-binding protein from Flavobacterium johnsoniae (strain ATCC 17061 / DSM 2064 / JCM 8514 / BCRC 14874 / CCUG 350202 / NBRC 14942 / NCIMB 11054 / UW101) (Cytophaga johnsonae).